The following is a 379-amino-acid chain: Anthranilate O-methyltransferase 3 (379 aa).

The span at 1-10 (MPMRIERDLH) shows a compositional bias: basic and acidic residues. The interval 1–21 (MPMRIERDLHMATGNGETSYT) is disordered. Residue tyrosine 20 coordinates S-adenosyl-L-homocysteine. Position 27 (glutamine 27) interacts with anthranilate. S-adenosyl-L-homocysteine contacts are provided by cysteine 61, asparagine 66, aspartate 100, leucine 101, serine 143, and phenylalanine 144. Residues histidine 164 and tryptophan 165 each contribute to the anthranilate site. Residues glutamate 265 and phenylalanine 267 each coordinate Mg(2+).

This sequence belongs to the methyltransferase superfamily. Type-7 methyltransferase family. SABATH subfamily.

The catalysed reaction is anthranilate + S-adenosyl-L-methionine = O-methyl anthranilate + S-adenosyl-L-homocysteine. It carries out the reaction benzoate + S-adenosyl-L-methionine = methyl benzoate + S-adenosyl-L-homocysteine. It catalyses the reaction salicylate + S-adenosyl-L-methionine = methyl salicylate + S-adenosyl-L-homocysteine. Methyltransferase involved in the biosynthesis of methyl anthranilate in response to stresses. Utilizes anthranilic acid as substrate. Produces exclusively the O-methyl ester. Can also use benzoic acid as substrate. Low activity with salicylic acid. This is Anthranilate O-methyltransferase 3 (AAMT3) from Zea mays (Maize).